A 494-amino-acid chain; its full sequence is Glutamyl-tRNA(Gln) amidotransferase subunit A (494 aa).

Catalysis depends on charge relay system residues lysine 80 and serine 155. Residue serine 179 is the Acyl-ester intermediate of the active site.

The protein belongs to the amidase family. GatA subfamily. Heterotrimer of A, B and C subunits.

The catalysed reaction is L-glutamyl-tRNA(Gln) + L-glutamine + ATP + H2O = L-glutaminyl-tRNA(Gln) + L-glutamate + ADP + phosphate + H(+). In terms of biological role, allows the formation of correctly charged Gln-tRNA(Gln) through the transamidation of misacylated Glu-tRNA(Gln) in organisms which lack glutaminyl-tRNA synthetase. The reaction takes place in the presence of glutamine and ATP through an activated gamma-phospho-Glu-tRNA(Gln). The polypeptide is Glutamyl-tRNA(Gln) amidotransferase subunit A (Lachnoclostridium phytofermentans (strain ATCC 700394 / DSM 18823 / ISDg) (Clostridium phytofermentans)).